A 113-amino-acid chain; its full sequence is Na(+)/H(+) antiporter subunit C (113 aa).

Helical transmembrane passes span 4 to 21, 28 to 47, and 67 to 89; these read LMAVLAGIIFMAATYLLL, VIIGTALLSHGVHLMLLTMG, and PLPQALILTAIVISFGVTSFILV.

This sequence belongs to the CPA3 antiporters (TC 2.A.63) subunit C family. Forms a heterooligomeric complex that consists of seven subunits: MrpA, MrpB, MrpC, MrpD, MrpE, MrpF and MrpG.

It is found in the cell membrane. In terms of biological role, mrp complex is a Na(+)/H(+) antiporter that is considered to be the major Na(+) excretion system in B.subtilis. Has a major role in Na(+) resistance and a minor role in Na(+)- and K(+)-dependent pH homeostasis as compared to TetB. MrpA may be the actual Na(+)/H(+) antiporter, although the six other Mrp proteins are all required for Na(+)/H(+) antiport activity and Na(+) resistance. MrpA is required for initiation of sporulation when external Na(+) concentration increases. Also transports Li(+) but not K(+), Ca(2+) or Mg(2+). This Bacillus subtilis (strain 168) protein is Na(+)/H(+) antiporter subunit C (mrpC).